A 382-amino-acid chain; its full sequence is Ubiquitin-like protease 4 (382 aa).

The segment at 46-106 (GTHLDGSIGE…DNDEWTNQKR (61 aa)) is disordered. Residues 84 to 100 (DLVDEDEEEEDEEDNDE) are compositionally biased toward acidic residues.

The protein belongs to the peptidase C48 family. In terms of tissue distribution, expressed in hermaphrodite-specific neurons, head muscles, body wall muscles and pharyngeal cells.

Its subcellular location is the cytoplasm. The protein localises to the cytoskeleton. It is found in the microtubule organizing center. The protein resides in the centrosome. It localises to the nucleus. Its subcellular location is the mitochondrion matrix. The protein operates within protein modification; protein sumoylation. Functionally, protease required for deconjugation of smo-1 conjugates from target proteins which is necessary for cell cycle progression. Required for respiration and the maintenance of normal mitochondrial homeostasis. In response to mitochondrial stress, required for the removal of smo-1 conjugates from the transcription factor dve-1, which promotes the translocation of dve-1 from the cytosol to the nucleus to initiate the mitochondrial unfolded protein response. Furthermore, removes the smo-1 conjugates from the transcription factor atfs-1 to promote its stability and activate the mitochondrial unfolded protein response. Also plays a role in promoting mitochondrial unfolded protein response-mediated innate immunity following infection with P.aeruginosa. The chain is Ubiquitin-like protease 4 from Caenorhabditis elegans.